The following is a 430-amino-acid chain: Adenylosuccinate synthetase (430 aa).

Residues 12–18 (GDEGKGK) and 40–42 (GHT) contribute to the GTP site. Asp-13 acts as the Proton acceptor in catalysis. 2 residues coordinate Mg(2+): Asp-13 and Gly-40. IMP contacts are provided by residues 13 to 16 (DEGK), 38 to 41 (NAGH), Thr-128, Arg-142, Gln-223, Thr-238, and Arg-302. Residue His-41 is the Proton donor of the active site. 298–304 (VNTGRTR) provides a ligand contact to substrate. GTP-binding positions include Arg-304, 330–332 (KLD), and 412–414 (GVG).

Belongs to the adenylosuccinate synthetase family. Homodimer. Mg(2+) serves as cofactor.

The protein localises to the cytoplasm. The enzyme catalyses IMP + L-aspartate + GTP = N(6)-(1,2-dicarboxyethyl)-AMP + GDP + phosphate + 2 H(+). Its pathway is purine metabolism; AMP biosynthesis via de novo pathway; AMP from IMP: step 1/2. Its function is as follows. Plays an important role in the de novo pathway of purine nucleotide biosynthesis. Catalyzes the first committed step in the biosynthesis of AMP from IMP. The polypeptide is Adenylosuccinate synthetase (Corynebacterium ammoniagenes (Brevibacterium ammoniagenes)).